A 411-amino-acid chain; its full sequence is MTVPYYRDVPTGNALRNFFKIMLKRKGNLFTAIFKELCLFLGLYFLFMVIYRLVLPKSGGQREIRKIVENLLSHQEFTIPLEFLLGFFVSSVVDRWRKSLDSLAYIESCAHAVVIGFPPNSNGSDKNLLIRRTIIRYLVVSQILLYREISLKVRRRFKKLTILGKAKLLNQNEIDKLNKLECKHYDIYFLPISWALSLIEDKIDKENLANEFTILWGQIKEWQTKLSLLRNCDYIPIPLAYPQAVFLAVRCYFAVCVFTRQHLDRYDSKMHTWITFFPVLTTFQYIFMMGWMKVAEILLNPMGEDEDDFELNFIIDNNLKNGLDIVSGLCGNHRKLAEHEIENDCRPYYQTNEQDRKKNRAPPESLKNVEFKSFTMEKASKDSPMVVKSESVCCLRRRFNSSAKKHHDSKV.

4 helical membrane passes run 30–50 (FTAI…FMVI), 73–93 (SHQE…SSVV), 235–255 (IPIP…YFAV), and 272–292 (TWIT…MGWM).

The protein belongs to the anion channel-forming bestrophin (TC 1.A.46) family. Calcium-sensitive chloride channel subfamily. As to quaternary structure, forms oligomers.

The protein resides in the cell membrane. In terms of biological role, forms chloride channels. This is Bestrophin homolog 26 (best-26) from Caenorhabditis elegans.